A 474-amino-acid chain; its full sequence is Probable multidrug resistance protein NorM (474 aa).

12 helical membrane-spanning segments follow: residues 33-50 (LWLAWPMALTQLGQIAMM), 65-87 (VAAAALAHFVLFSTFTMGLGLVS), 108-130 (SLRVGLWAGVIAGVPLTLGQLYG), 150-172 (YLDGLAWSLVPGWLFIALRGLMG), 179-201 (PALWIMLTAIPINLGLAYVLIHG), 211-233 (FGAGLATSIVSWAMCIAAAVVCV), 258-280 (LLQLGLPISGASVLEYGVFGAAA), 295-317 (QIALQVAAIMFMVPMGISVAATV), 334-356 (AGFAAIGLGFVFMAAMTLLVALT), 376-398 (TLTAALLIVGASFFIADGLQVVA), 410-432 (VPLLFAVLGFWVIGFPFCWVLGF), and 436-458 (LGPFGVWIGLAVGLVVYAALLVW).

The protein belongs to the multi antimicrobial extrusion (MATE) (TC 2.A.66.1) family.

The protein resides in the cell inner membrane. Functionally, multidrug efflux pump. This chain is Probable multidrug resistance protein NorM (norM), found in Rhodopseudomonas palustris (strain ATCC BAA-98 / CGA009).